A 249-amino-acid chain; its full sequence is Tryptophan synthase alpha chain (249 aa).

Catalysis depends on proton acceptor residues Glu43 and Asp54.

Belongs to the TrpA family. As to quaternary structure, tetramer of two alpha and two beta chains.

The enzyme catalyses (1S,2R)-1-C-(indol-3-yl)glycerol 3-phosphate + L-serine = D-glyceraldehyde 3-phosphate + L-tryptophan + H2O. Its pathway is amino-acid biosynthesis; L-tryptophan biosynthesis; L-tryptophan from chorismate: step 5/5. Functionally, the alpha subunit is responsible for the aldol cleavage of indoleglycerol phosphate to indole and glyceraldehyde 3-phosphate. The chain is Tryptophan synthase alpha chain from Campylobacter jejuni subsp. doylei (strain ATCC BAA-1458 / RM4099 / 269.97).